The sequence spans 340 residues: Guanine nucleotide-binding protein G(I)/G(S)/G(T) subunit beta-3 (340 aa).

WD repeat units lie at residues 53 to 83 (GHLAKIYAMHWATDSKLLVSASQDGKLIVWD), 95 to 125 (LRSSWVMTCAYAPSGNFVACGGLDNMCSIYN), 141 to 170 (AHTGYLSCCRFLDDNNIVTSSGDTTCALWD), 182 to 212 (GHTGDCMSLAVSPDYKLFISGACDASAKLWD), 224 to 254 (GHESDINAICFFPNGEAICTGSDDASCRLFD), 268 to 298 (SIICGITSVAFSLSGRLLFAGYDDFNCNVWD), and 310 to 340 (GHDNRVSCLGVTADGMAVATGSWDSFLKIWN).

The protein belongs to the WD repeat G protein beta family. G proteins are composed of 3 units, alpha, beta and gamma. Interacts with RASD2.

Guanine nucleotide-binding proteins (G proteins) are involved as a modulator or transducer in various transmembrane signaling systems. The beta and gamma chains are required for the GTPase activity, for replacement of GDP by GTP, and for G protein-effector interaction. In Mus musculus (Mouse), this protein is Guanine nucleotide-binding protein G(I)/G(S)/G(T) subunit beta-3 (Gnb3).